The following is a 450-amino-acid chain: MLKYFGTDGVRGEANKVLTPEMAFKLGRMGGYVLTKEKEDGGQARVLVSRDTRISGEMLEHALISGLLSVGIEVLECGVMTTPGLSYLVQAQGADAGVQISASHNPVEDNGIKFFGSNGLKLSDAKEEEIEELIDTKQDMLPRPSAEGLGTVTDFRDGSNKYIQFLENTIPEDLSGIKVVIDGANGAASAFISRLFADLDVDFTTISTHPNGLNINDHCGATHTARLQEEVVKQGAQLGLAFDGDADRCIAVDENGNEVDGDHIMYVIGSYLADHGRLKKDTIVTTVMSNLGFTKALERRGIKNVRTQVGDRYVSEEMRANGYSLGGEQSGHVIISDYHNTGDGMLTGLHLMLVMKKTGKSLTELLADFKEYPQVLVNVPVKDKNSWKNHQAVVDAIDSVEKDMAGNGRVLVRPSGTQELLRVMAEGPTQEITQEYVDRIVKVVTTEMGE.

Ser-103 (phosphoserine intermediate) is an active-site residue. The Mg(2+) site is built by Ser-103, Asp-243, Asp-245, and Asp-247. The residue at position 103 (Ser-103) is a Phosphoserine.

The protein belongs to the phosphohexose mutase family. It depends on Mg(2+) as a cofactor. Post-translationally, activated by phosphorylation.

It carries out the reaction alpha-D-glucosamine 1-phosphate = D-glucosamine 6-phosphate. In terms of biological role, catalyzes the conversion of glucosamine-6-phosphate to glucosamine-1-phosphate. The sequence is that of Phosphoglucosamine mutase from Lactobacillus delbrueckii subsp. bulgaricus (strain ATCC BAA-365 / Lb-18).